The primary structure comprises 300 residues: N-acetylmannosamine kinase (300 aa).

Residues 5–12 (ALDIGGTK) and 132–139 (GVGGGIVL) contribute to the ATP site. Zn(2+) is bound by residues H156, C166, C168, and C173.

This sequence belongs to the ROK (NagC/XylR) family. NanK subfamily. As to quaternary structure, homodimer.

It catalyses the reaction an N-acyl-D-mannosamine + ATP = an N-acyl-D-mannosamine 6-phosphate + ADP + H(+). The protein operates within amino-sugar metabolism; N-acetylneuraminate degradation; D-fructose 6-phosphate from N-acetylneuraminate: step 2/5. Catalyzes the phosphorylation of N-acetylmannosamine (ManNAc) to ManNAc-6-P. This chain is N-acetylmannosamine kinase, found in Haemophilus influenzae (strain PittGG).